Reading from the N-terminus, the 291-residue chain is MGSCGAVGSVRARYLVFLQYLGTDFNGVAAVRGNPRAVGVLNFLEEAAKRLNSVDPVRFTISSRTDAGVHALSNAAHLDIQRRPGQSPFSPEVVAKALNTHLKHPAIRVLKAFRVPNDFHARHAATSRTYQYRLATGCSWPNQLPVFEQNVCWALQTEYLDMAAMQEAAQHLLGTHDFSAFQSAGSPVTNTVRTLRRVSVSPGPASPFVLPEGSRRLQFWTLEFESQSFLYRQVRRMTAVLVAVGLGILAPTQVKVILESQDPLGKYQARVAPARGLFLKSVLYDNFGPTS.

Asp66 serves as the catalytic Nucleophile. Residue Tyr130 coordinates substrate.

This sequence belongs to the tRNA pseudouridine synthase TruA family.

It catalyses the reaction a uridine in tRNA = a pseudouridine in tRNA. The chain is tRNA pseudouridine synthase-like 1 (Pusl1) from Mus musculus (Mouse).